The primary structure comprises 3530 residues: Unconventional myosin-XV (3530 aa).

3 disordered regions span residues 1–46 (MAKE…RTPK), 615–710 (AGMD…PAHV), and 730–1057 (EVPP…QKTL). Over residues 663-681 (PPVPPRPPSSGPPPAPPLS) the composition is skewed to pro residues. 3 stretches are compositionally biased toward low complexity: residues 682 to 693 (PALSGLPRPASP), 753 to 763 (AAFGFPGASPR), and 823 to 835 (SPAP…RLGP). Residues 836–850 (PGSPLPGSPRPPSPP) are compositionally biased toward pro residues. The span at 859–869 (RSSLNLPSRLP) shows a compositional bias: low complexity. Positions 903–913 (PLEHRESPREP) are enriched in basic and acidic residues. Over residues 1027 to 1038 (TKPPTPAPPKDV) the composition is skewed to pro residues. A Myosin motor domain is found at 1222-1899 (DGVEDMTQLE…LYQLLESMRE (678 aa)). Residue 1315 to 1322 (GESGSGKT) participates in ATP binding. The stretch at 1323 to 1350 (EATKLILRYLAAMNQKREVMQQIKILEA) forms a coiled coil. Residues 1792-1799 (FMRCLKPN) are actin-binding. The neck or regulatory domain stretch occupies residues 1888–2029 (EHLYQLLESM…AQVPQVAPVR (142 aa)). IQ domains lie at 1902–1924 (LNLA…RFRS), 1925–1954 (LRHK…SLVK), and 1955–1976 (FRSL…AEWR). The tail stretch occupies residues 2030 to 3530 (TPRLQAEPRV…TLPPSEITLL (1501 aa)). One can recognise a MyTH4 1 domain in the interval 2065 to 2217 (MLTVPLRTPL…PTQLEWTATY (153 aa)). Disordered regions lie at residues 2311-2381 (AASR…GEPA), 2414-2446 (YRMK…IPGL), 2490-2509 (AEKP…GPPA), and 2644-2665 (TSAP…LEPP). Residues 2349-2371 (GYSSHNQDGTNGETEAQRGTATH) are compositionally biased toward polar residues. A compositionally biased stretch (gly residues) spans 2417 to 2427 (KGGGQPGGGSS). The 87-residue stretch at 2867 to 2953 (KDSDYVVAVR…PSELVQPAAA (87 aa)) folds into the SH3 domain. In terms of domain architecture, MyTH4 2 spans 3050–3204 (FTKTPLQESL…PSSIELRAML (155 aa)). Positions 3209–3530 (SKRQLFLLPG…TLPPSEITLL (322 aa)) constitute an FERM domain.

It belongs to the TRAFAC class myosin-kinesin ATPase superfamily. Myosin family. Interacts with the third PDZ domain of WHRN which is necessary for localization of WHRN to stereocilium tips. Interacts with EPS8. Interacts with FASLG. In terms of tissue distribution, highly expressed in pituitary. Also expressed at lower levels in adult brain, kidney, liver, lung, pancreas, placenta and skeletal muscle. Not expressed in brain. In the pituitary, highly expressed in anterior gland cells.

The protein resides in the cell projection. Its subcellular location is the stereocilium. It is found in the cytoplasm. The protein localises to the cytoskeleton. Myosins are actin-based motor molecules with ATPase activity. Unconventional myosins serve in intracellular movements. Their highly divergent tails are presumed to bind to membranous compartments, which would be moved relative to actin filaments. Required for the arrangement of stereocilia in mature hair bundles. This Homo sapiens (Human) protein is Unconventional myosin-XV (MYO15A).